We begin with the raw amino-acid sequence, 426 residues long: D-tagatose-1,6-bisphosphate aldolase subunit KbaZ (426 aa).

Belongs to the GatZ/KbaZ family. KbaZ subfamily. In terms of assembly, forms a complex with KbaY.

It participates in carbohydrate metabolism; D-tagatose 6-phosphate degradation; D-glyceraldehyde 3-phosphate and glycerone phosphate from D-tagatose 6-phosphate: step 2/2. Functionally, component of the tagatose-1,6-bisphosphate aldolase KbaYZ that is required for full activity and stability of the Y subunit. Could have a chaperone-like function for the proper and stable folding of KbaY. When expressed alone, KbaZ does not show any aldolase activity. This is D-tagatose-1,6-bisphosphate aldolase subunit KbaZ from Escherichia coli O6:H1 (strain CFT073 / ATCC 700928 / UPEC).